We begin with the raw amino-acid sequence, 263 residues long: Urease accessory protein UreH (263 aa).

It belongs to the UreD family. In terms of assembly, ureH, UreF and UreG form a complex that acts as a GTP-hydrolysis-dependent molecular chaperone, activating the urease apoprotein by helping to assemble the nickel containing metallocenter of UreC. The UreE protein probably delivers the nickel.

The protein resides in the cytoplasm. In terms of biological role, required for maturation of urease via the functional incorporation of the urease nickel metallocenter. The chain is Urease accessory protein UreH from Helicobacter acinonychis (strain Sheeba).